Reading from the N-terminus, the 419-residue chain is Voltage-gated potassium channel subunit beta-1 (419 aa).

Positions 1-51 (MLAARTGAAGSQIAEESSKLRKQAAFSGGSKDRSPKKASENVKDSSLSPSG) are disordered. The span at 30–43 (SKDRSPKKASENVK) shows a compositional bias: basic and acidic residues. Residues T108, W109, Q115, and D137 each contribute to the NADP(+) site. The active-site Proton donor/acceptor is Y142. N210, S240, R241, Q266, W295, S296, P297, L298, A299, C300, K306, R316, G375, S377, Q381, E384, and N385 together coordinate NADP(+).

This sequence belongs to the shaker potassium channel beta subunit family. Homotetramer. Interaction with tetrameric potassium channel alpha subunits gives rise to a heterooctamer. Identified in potassium channel complexes containing KCNA1, KCNA2, KCNA4, KCNA5, KCNA6, KCNAB1 and KCNAB2. Part of a complex containing KCNA1, KCNA4 and LGI1; interaction with LGI1 inhibits down-regulation of KCNA1 channel activity. Interacts with the dimer formed by GNB1 and GNG2; this enhances KCNA1 binding. Interacts with SQSTM1. As to expression, detected in portal vein myocytes (at protein level).

The protein localises to the cytoplasm. It is found in the membrane. The protein resides in the cell membrane. The enzyme catalyses a primary alcohol + NADP(+) = an aldehyde + NADPH + H(+). It catalyses the reaction a secondary alcohol + NADP(+) = a ketone + NADPH + H(+). Regulatory subunit of the voltage-gated potassium (Kv) channels composed of pore-forming and potassium-conducting alpha subunits and of regulatory beta subunits. The beta-1/KCNAB1 cytoplasmic subunit mediates closure of delayed rectifier potassium channels by physically obstructing the pore via its N-terminal domain and increases the speed of channel closure for other family members. Promotes the inactivation of KCNA1, KCNA2, KCNA4, KCNA5 and KCNA6 alpha subunit-containing channels. Displays nicotinamide adenine dinucleotide phosphate (NADPH)-dependent aldoketoreductase activity by catalyzing the NADPH-dependent reduction of a variety of endogenous aldehydes and ketones. The binding of NADPH is required for efficient down-regulation of potassium channel activity. Oxidation of the bound NADPH restrains N-terminal domain from blocking the channel, thereby decreasing N-type inactivation of potassium channel activity. The protein is Voltage-gated potassium channel subunit beta-1 (KCNAB1) of Oryctolagus cuniculus (Rabbit).